We begin with the raw amino-acid sequence, 479 residues long: Baeyer-Villiger monooxygenase AacuH (479 aa).

The disordered stretch occupies residues 14–34; it reads DSLGHPDGASRPPVSAESLSR.

Belongs to the AflY oxidoreductase family.

The protein operates within secondary metabolite biosynthesis. Baeyer-Villiger monooxygenase; part of the gene cluster that mediates the biosynthesis of the tetrahydroxanthone dimer secalonic acid D. The pathway begins with the synthesis of atrochrysone thioester by the polyketide synthase AacuL. The atrochrysone carboxyl ACP thioesterase AacuM then breaks the thioester bond and releases the atrochrysone carboxylic acid from AacuL. Atrochrysone carboxylic acid is decarboxylated by the decarboxylase AacuI, and oxidized by the anthrone oxygenase AacuG to yield emodin. Emodin is then reduced to emodin hydroquinone by a yet unidentified oxidoreductase. A-ring reduction by the short chain dehydrogenase AacuN, dehydration by the scytalone dehydratase-like protein AacuK and probable spontaneous re-oxidation, results in overall deoxygenation to chrysophanol. Baeyer-Villiger oxidation by the Baeyer-Villiger monooxygenase (BVMO) AacuH then yields monodictyphenone. Monodictyphenone is transformed into compounds with the tetrahydroxanthone skeleton via methylesterification by the methyltransferase AacuQ, followed by the action of the flavin-dependent monooxygenase AacuC, the isomerase AacuP, and the short chain dehydrogenase/reductase AacuF or AacuD. AacuF and AacuD should accept the same compound as a substrate but perform the ketoreduction with a different stereoselectivity, thus yielding blennolides B and A, respectively. In the final step of the biosynthesis, the cytochrome P450 monooxygenase AacuE accepts blennolide B and/or blennolide A to conduct the dimerization reaction to furnish the tetrahydroxanthone dimers, secalonic acids D, B, and F. The sequence is that of Baeyer-Villiger monooxygenase AacuH from Aspergillus aculeatus (strain ATCC 16872 / CBS 172.66 / WB 5094).